The chain runs to 75 residues: MPQISRYSDEQVEQLLAELLNVLEKHKAPTDLSLMVLGNMVTNLINTSIAPAQRQAIANSFARALQSSINEDKAH.

The protein belongs to the UPF0352 family.

In Shigella sonnei (strain Ss046), this protein is UPF0352 protein YejL.